Here is a 214-residue protein sequence, read N- to C-terminus: GTP-binding protein ypt3 (214 aa).

17-24 (GDSGVGKS) lines the GTP pocket. The Effector region signature appears at 39 to 47 (SKSTIGVEF). T42 bears the Phosphothreonine mark. Residues 65–69 (DTAGQ) and 123–126 (NKTD) contribute to the GTP site. 2 S-geranylgeranyl cysteine lipidation sites follow: C213 and C214.

Belongs to the small GTPase superfamily. Rab family.

Its subcellular location is the cell membrane. The protein resides in the endosome membrane. The protein localises to the golgi apparatus membrane. It localises to the cytoplasm. It is found in the nucleus. Functionally, has a role in retrograde traffricking of proteins from the endosome to the Golgi. Involved in the secretory pathway where it has a role in acid phosphatase secretion. The chain is GTP-binding protein ypt3 (ypt3) from Schizosaccharomyces pombe (strain 972 / ATCC 24843) (Fission yeast).